Reading from the N-terminus, the 379-residue chain is Glutamate 5-kinase (379 aa).

Lys-15 lines the ATP pocket. Positions 56, 143, and 155 each coordinate substrate. 175–176 (SD) is a binding site for ATP. The PUA domain maps to 281 to 358 (RGTLAIDAGA…SDAAQLLGVR (78 aa)).

This sequence belongs to the glutamate 5-kinase family.

It localises to the cytoplasm. The enzyme catalyses L-glutamate + ATP = L-glutamyl 5-phosphate + ADP. The protein operates within amino-acid biosynthesis; L-proline biosynthesis; L-glutamate 5-semialdehyde from L-glutamate: step 1/2. Its function is as follows. Catalyzes the transfer of a phosphate group to glutamate to form L-glutamate 5-phosphate. The protein is Glutamate 5-kinase of Nitrobacter winogradskyi (strain ATCC 25391 / DSM 10237 / CIP 104748 / NCIMB 11846 / Nb-255).